The sequence spans 402 residues: CCA-adding enzyme (402 aa).

G32 and R35 together coordinate ATP. G32 and R35 together coordinate CTP. Mg(2+) is bound by residues D45 and D47. The ATP site is built by R116, D159, R162, R165, and R168. R116, D159, R162, R165, and R168 together coordinate CTP.

This sequence belongs to the tRNA nucleotidyltransferase/poly(A) polymerase family. Bacterial CCA-adding enzyme type 3 subfamily. In terms of assembly, homodimer. Requires Mg(2+) as cofactor.

It catalyses the reaction a tRNA precursor + 2 CTP + ATP = a tRNA with a 3' CCA end + 3 diphosphate. The catalysed reaction is a tRNA with a 3' CCA end + 2 CTP + ATP = a tRNA with a 3' CCACCA end + 3 diphosphate. In terms of biological role, catalyzes the addition and repair of the essential 3'-terminal CCA sequence in tRNAs without using a nucleic acid template. Adds these three nucleotides in the order of C, C, and A to the tRNA nucleotide-73, using CTP and ATP as substrates and producing inorganic pyrophosphate. tRNA 3'-terminal CCA addition is required both for tRNA processing and repair. Also involved in tRNA surveillance by mediating tandem CCA addition to generate a CCACCA at the 3' terminus of unstable tRNAs. While stable tRNAs receive only 3'-terminal CCA, unstable tRNAs are marked with CCACCA and rapidly degraded. The polypeptide is CCA-adding enzyme (Streptococcus pyogenes serotype M4 (strain MGAS10750)).